Reading from the N-terminus, the 102-residue chain is UPF0328 protein ECU10_1820 (102 aa).

Belongs to the UPF0328 family.

This Encephalitozoon cuniculi (strain GB-M1) (Microsporidian parasite) protein is UPF0328 protein ECU10_1820.